Here is a 348-residue protein sequence, read N- to C-terminus: NFSTPLNEHEEVSYESAGYTVLRILPLVVLGVTFVLGVLGNGLVIWVAGFRMTRTVTTICYLNLALADFSFTATLPFLIVSMAMGEKWPFGWFLCKLIHIVVDINLFGSVFLIGFIALDRCICVLHPVWAQNHRTVSLAMKVIVGPWILALVLTLPVFLFLTTVTIPNGDTYCTFNFASWGGTPEERQKVAITMLTARGIIRFVIGFSLPMSIVAICYGLIAAKIHKKGMIKSSRPLRVLTAVVASFFICWFPFQLVALLGTVWLKEMLFYGKYKIIDILVNPTSSLAFFNSCLNPMLYVFVGQDFRERLIHSLPTSLERALSEDSAPTNDTAASCASPPAETELQAM.

N-linked (GlcNAc...) asparagine glycosylation occurs at N1. At N1–I24 the chain is on the extracellular side. Residues L25–V47 traverse the membrane as a helical segment. At A48 to T58 the chain is on the cytoplasmic side. A helical membrane pass occupies residues I59–V80. Residues S81–L97 are Extracellular-facing. A disulfide bond links C95 and C173. The helical transmembrane segment at I98–L118 threads the bilayer. The Cytoplasmic portion of the chain corresponds to D119–S137. The chain crosses the membrane as a helical span at residues L138 to L159. Topologically, residues F160–R202 are extracellular. A helical transmembrane segment spans residues F203–A223. The Cytoplasmic portion of the chain corresponds to K224–V239. A helical transmembrane segment spans residues L240–V263. At W264 to P283 the chain is on the extracellular side. The helical transmembrane segment at T284–G303 threads the bilayer. The Cytoplasmic portion of the chain corresponds to Q304–M348. The disordered stretch occupies residues S323–M348. Positions S326–S335 are enriched in polar residues.

Belongs to the G-protein coupled receptor 1 family. In terms of assembly, interacts with APP; the interaction takes place at the cell surface and the complex is then rapidly internalized.

It is found in the cell membrane. In terms of biological role, low affinity receptor for N-formyl-methionyl peptides, which are powerful neutrophil chemotactic factors. Binding of FMLP to the receptor causes activation of neutrophils. This response is mediated via a G-protein that activates a phosphatidylinositol-calcium second messenger system. Receptor for the chemokine-like protein FAM19A5, mediating FAM19A5-stimulated macrophage chemotaxis and the inhibitory effect on TNFSF11/RANKL-induced osteoclast differentiation. This Gorilla gorilla gorilla (Western lowland gorilla) protein is N-formyl peptide receptor 2 (FPR2).